Reading from the N-terminus, the 101-residue chain is Large ribosomal subunit protein bL28 (101 aa).

Belongs to the bacterial ribosomal protein bL28 family.

In Rhodopseudomonas palustris (strain BisB5), this protein is Large ribosomal subunit protein bL28.